Here is a 671-residue protein sequence, read N- to C-terminus: DNA polymerase kappa (671 aa).

The 181-residue stretch at 105 to 285 (WLHVDMDAFY…LPVRKIGGIG (181 aa)) folds into the UmuC domain. Mg(2+) contacts are provided by aspartate 109 and aspartate 200. Glutamate 201 is an active-site residue. The UBZ3-type zinc finger occupies 576–613 (YWIDGYKCVLCGIELPPSFVEERQEHSDFHLAQRLQNE). Zn(2+)-binding residues include cysteine 583, cysteine 586, histidine 601, and histidine 605. The interval 607-671 (AQRLQNEETG…NQNSNETQRK (65 aa)) is disordered. Residues 625-632 (KRRILGKE) carry the Nuclear localization signal motif. Residues 629 to 650 (LGKEKVNSKPKKQKPDQKDSSK) show a composition bias toward basic and acidic residues. A compositionally biased stretch (polar residues) spans 659–671 (TKSNQNSNETQRK).

This sequence belongs to the DNA polymerase type-Y family. Mg(2+) serves as cofactor. As to expression, expressed in roots, leaves, stems, flowers and siliques. Present in endoreduplicating cells.

The protein resides in the nucleus. The enzyme catalyses DNA(n) + a 2'-deoxyribonucleoside 5'-triphosphate = DNA(n+1) + diphosphate. Unable to bypass a single 1,N(6)-ethenoadenine (epsilon-dA) or an abasic site lesions in DNA templates. Functionally, template-directed low-fidelity DNA polymerase specifically involved in DNA repair. Able to extend primer-terminal mispairs, and to insert nucleotides opposite to a single 7,8-dihydro-8-oxoGuanine (8-oxoG) lesion and moderately extend from the resulting primer end, thus leading to both error-free and error-prone bypass of 8-oxoG DNA lesions. Probably involved in consecutive DNA replication cycles in the absence of mitosis. Binds preferentially template-primer DNA substrates or single-stranded DNA. Plays an important role in translesion synthesis, where the normal high-fidelity DNA polymerases cannot proceed and DNA synthesis stalls. Depending on the context, it inserts the correct base, but causes frequent base transitions, transversions and frameshifts. The chain is DNA polymerase kappa from Arabidopsis thaliana (Mouse-ear cress).